A 333-amino-acid polypeptide reads, in one-letter code: Probable xyloglucan endotransglucosylase/hydrolase protein 27 (333 aa).

Positions methionine 1–glycine 20 are cleaved as a signal peptide. One can recognise a GH16 domain in the interval phenylalanine 21 to phenylalanine 223. Glutamate 108 serves as the catalytic Nucleophile. Glutamate 112 acts as the Proton donor in catalysis. Residues glutamate 112 and glutamine 125–asparagine 127 each bind xyloglucan. Asparagine 131 is a glycosylation site (N-linked (GlcNAc...) asparagine). Residues histidine 135 to glutamate 139, lysine 202 to tryptophan 203, glycine 207, and arginine 282 each bind xyloglucan. A disulfide bridge links cysteine 277 with cysteine 290. The interval isoleucine 311–isoleucine 333 is disordered. A compositionally biased stretch (basic residues) spans proline 312–arginine 324.

This sequence belongs to the glycosyl hydrolase 16 family. XTH group 3 subfamily. In terms of processing, contains at least one intrachain disulfide bond essential for its enzymatic activity. Expressed in 7 day old seedlings, roots, hypocotyls, rosette leaves, internodes between nodes bearing axillary shoots, nodes bearing flowers, flower buds, anthers and siliques.

The protein resides in the secreted. It is found in the cell wall. It localises to the extracellular space. The protein localises to the apoplast. It carries out the reaction breaks a beta-(1-&gt;4) bond in the backbone of a xyloglucan and transfers the xyloglucanyl segment on to O-4 of the non-reducing terminal glucose residue of an acceptor, which can be a xyloglucan or an oligosaccharide of xyloglucan.. Functionally, catalyzes xyloglucan endohydrolysis (XEH) and/or endotransglycosylation (XET). Cleaves and religates xyloglucan polymers, an essential constituent of the primary cell wall, and thereby participates in cell wall construction of growing tissues. Required for cell wall modification during the development of tracheary elements. The chain is Probable xyloglucan endotransglucosylase/hydrolase protein 27 (XTH27) from Arabidopsis thaliana (Mouse-ear cress).